Here is a 314-residue protein sequence, read N- to C-terminus: Ribosomal RNA small subunit methyltransferase H (314 aa).

Residues 37-39 (GGH), Asp-56, Phe-86, Asp-108, and His-115 contribute to the S-adenosyl-L-methionine site.

The protein belongs to the methyltransferase superfamily. RsmH family.

Its subcellular location is the cytoplasm. It catalyses the reaction cytidine(1402) in 16S rRNA + S-adenosyl-L-methionine = N(4)-methylcytidine(1402) in 16S rRNA + S-adenosyl-L-homocysteine + H(+). In terms of biological role, specifically methylates the N4 position of cytidine in position 1402 (C1402) of 16S rRNA. This Leptospira biflexa serovar Patoc (strain Patoc 1 / ATCC 23582 / Paris) protein is Ribosomal RNA small subunit methyltransferase H.